The sequence spans 208 residues: Probable acyl-homoserine-lactone synthase (208 aa).

Belongs to the autoinducer synthase family.

The enzyme catalyses a fatty acyl-[ACP] + S-adenosyl-L-methionine = an N-acyl-L-homoserine lactone + S-methyl-5'-thioadenosine + holo-[ACP] + H(+). Functionally, required for the synthesis of OHHL (N-(3-oxooctanoyl)-L-homoserine lactone), an autoinducer molecule which binds to TraR and thus acts in the control of conjugal transfer. This chain is Probable acyl-homoserine-lactone synthase (traI), found in Sinorhizobium fredii (strain NBRC 101917 / NGR234).